The primary structure comprises 290 residues: UPF0761 membrane protein YihY (290 aa).

Topologically, residues 1–43 (MLKTVHQKAGRHTRPVRAWLKLLWQRIDEDNMTTLAGNLAYVS) are cytoplasmic. A helical transmembrane segment spans residues 44-64 (LLSLVPLIAVVFALFAAFPMF). The Periplasmic segment spans residues 65–103 (SDVSIQLRHFIFANFMPATGDVIQRYIEQFVANSNKMTA). A helical transmembrane segment spans residues 104–124 (VGACGLIVTALLLMYAIDSAL). Over 125–139 (NTIWRSKRTRPKVYS) the chain is Cytoplasmic. A helical transmembrane segment spans residues 140–160 (FAVYWMILTLGPLLAGVSLAI). The Periplasmic portion of the chain corresponds to 161–179 (SSYLLSLRWASDLNTVIDN). Residues 180 to 200 (VLHILPLLLSWISFWLLYSIV) form a helical membrane-spanning segment. The Cytoplasmic segment spans residues 201–209 (PTTRVPNRD). The chain crosses the membrane as a helical span at residues 210-230 (ALVGAFVAALLFEAGKKGFAL). The Periplasmic portion of the chain corresponds to 231–243 (YITMFPSYQLIYG). A helical transmembrane segment spans residues 244 to 264 (VLAVIPILFVWVYWTWCIVLL). Residues 265-290 (GAEITVTLGEYRKLKQAAEQEEADQP) are Cytoplasmic-facing.

It belongs to the UPF0761 family.

Its subcellular location is the cell inner membrane. This is UPF0761 membrane protein YihY from Salmonella typhimurium (strain LT2 / SGSC1412 / ATCC 700720).